Here is a 740-residue protein sequence, read N- to C-terminus: Gramillins biosynthetic cluster protein FGSG_11657 (740 aa).

Disordered regions lie at residues 353–391 (QADS…SSIP), 414–434 (SKLS…DAAS), 514–535 (PKEQ…GSSD), and 656–686 (EHEG…PQGD). Positions 656 to 667 (EHEGEGRADTNR) are enriched in basic and acidic residues. The segment covering 668 to 682 (HVSTQSNMPTEQSLL) has biased composition (polar residues).

Its pathway is mycotoxin biosynthesis. Its function is as follows. Part of the gene cluster that mediates the biosynthesis of gramillins A and B, bicyclic lipopeptides that induce cell death in maize leaves but not in wheat leaves. The nonribosomal peptide synthetase GRA1 incorporates respectively a glutamic adic (Glu), a leucine (Leu), a serine (Ser), a hydroxyglutamine (HOGln), a 2-amino decanoic acid, and 2 cysteins (CysB and CysA). The biosynthesis of 2-amino decanoic acid incorporated in gramillins could be initiated by a fatty acid synthase composed of the alpha and beta subunits FGSG_00036 and FGSG_11656. The cytochrome P450 monooxygenase FGSG_15680 could hydroxylate the fatty acid chain. Subsequent oxidation to the ketone by the oxidoreductase FGSG_00048 and transamination by aminotransferase FGSG_00049 could form 2-amino-decanoic acid. On the other hand, FGSG_15680 could also be responsible for the HO-modified glutamine at the gamma-position. Whether hydroxylation occurs on the fully assembled product or on the Gln residue prior to assembly into the gramillins requires further proof. The thioredoxin FGSG_00043 could also be required for the disulfide-bond formation between CysA and CysB. The specific involvement of the remaining proteins from the cluster is more difficult to discern, but could have broader regulatory (FGSG_00040 and FGSG_11657) or enzymatic functions (FGSG_00044 and FGSG_00045). The final C-domain of GRA1 does not possess the expected sequence of a termination CT domain, often implicated in macrocyclization and release of a cyclopeptidein fungal NRPs; and the thioesterase FGSG_00047 may act in concert with the terminal C-domain of GRA1 to catalyze the formation of the macrocyclic anhydride and release of the products. The sequence is that of Gramillins biosynthetic cluster protein FGSG_11657 from Gibberella zeae (strain ATCC MYA-4620 / CBS 123657 / FGSC 9075 / NRRL 31084 / PH-1) (Wheat head blight fungus).